We begin with the raw amino-acid sequence, 318 residues long: HPr kinase/phosphorylase (318 aa).

Catalysis depends on residues His-141 and Lys-162. Residue Gly-156–Ser-163 coordinates ATP. Ser-163 provides a ligand contact to Mg(2+). The active-site Proton acceptor; for phosphorylation activity. Proton donor; for dephosphorylation activity is Asp-180. Residues Leu-204 to Asn-213 are important for the catalytic mechanism of both phosphorylation and dephosphorylation. A Mg(2+)-binding site is contributed by Glu-205. Arg-248 is an active-site residue. An important for the catalytic mechanism of dephosphorylation region spans residues Pro-269–Arg-274.

Belongs to the HPrK/P family. In terms of assembly, homohexamer. Requires Mg(2+) as cofactor.

It catalyses the reaction [HPr protein]-L-serine + ATP = [HPr protein]-O-phospho-L-serine + ADP + H(+). The enzyme catalyses [HPr protein]-O-phospho-L-serine + phosphate + H(+) = [HPr protein]-L-serine + diphosphate. Catalyzes the ATP- as well as the pyrophosphate-dependent phosphorylation of a specific serine residue in HPr, a phosphocarrier protein of the phosphoenolpyruvate-dependent sugar phosphotransferase system (PTS). HprK/P also catalyzes the pyrophosphate-producing, inorganic phosphate-dependent dephosphorylation (phosphorolysis) of seryl-phosphorylated HPr (P-Ser-HPr). The polypeptide is HPr kinase/phosphorylase (Chromobacterium violaceum (strain ATCC 12472 / DSM 30191 / JCM 1249 / CCUG 213 / NBRC 12614 / NCIMB 9131 / NCTC 9757 / MK)).